The sequence spans 428 residues: C4-dicarboxylate transport protein (428 aa).

The next 8 helical transmembrane spans lie at 8-28 (SLYF…HFYP), 44-64 (LIKM…IAGM), 76-96 (VALL…LIIV), 142-162 (IGAF…LFGF), 184-206 (VIFG…AMAF), 222-242 (LIIC…GSIA), 326-346 (IVHQ…AAGV), and 352-372 (IVLA…LALI).

Belongs to the dicarboxylate/amino acid:cation symporter (DAACS) (TC 2.A.23) family.

It localises to the cell inner membrane. Functionally, responsible for the transport of dicarboxylates such as succinate, fumarate, and malate from the periplasm across the membrane. The sequence is that of C4-dicarboxylate transport protein from Shigella flexneri.